Reading from the N-terminus, the 402-residue chain is Arginine deiminase (402 aa).

Cysteine 392 serves as the catalytic Amidino-cysteine intermediate.

Belongs to the arginine deiminase family.

Its subcellular location is the cytoplasm. The enzyme catalyses L-arginine + H2O = L-citrulline + NH4(+). It participates in amino-acid degradation; L-arginine degradation via ADI pathway; carbamoyl phosphate from L-arginine: step 1/2. This chain is Arginine deiminase (arcA), found in Mycobacterium bovis (strain ATCC BAA-935 / AF2122/97).